We begin with the raw amino-acid sequence, 402 residues long: Cytochrome b561 and DOMON domain-containing protein At4g17280 (402 aa).

Positions 1-31 (MSNHMSIMKFLNQILCLSLILSISMTTLSFA) are cleaved as a signal peptide. The 118-residue stretch at 54 to 171 (LDSFLHYTYE…GTINTVWQDG (118 aa)) folds into the DOMON domain. In terms of domain architecture, Cytochrome b561 spans 183–379 (TSGNNVRSVS…LEAFTWYVVI (197 aa)). Transmembrane regions (helical) follow at residues 218–238 (IHGI…AIIA) and 250–270 (AWFY…VAGW). Histidine 219, histidine 255, and histidine 288 together coordinate heme b. A helical membrane pass occupies residues 290 to 310 (AIGIALFSLATVQVFAMFLRP). Position 324 (histidine 324) interacts with heme b. 2 helical membrane passes run 326-346 (TIGY…LGIL) and 359-379 (IIVV…YVVI).

The cofactor is heme b.

The protein resides in the membrane. Its function is as follows. May act as a catecholamine-responsive trans-membrane electron transporter. In Arabidopsis thaliana (Mouse-ear cress), this protein is Cytochrome b561 and DOMON domain-containing protein At4g17280.